A 654-amino-acid chain; its full sequence is Tetratricopeptide repeat protein 30 homolog (654 aa).

7 TPR repeats span residues D10–R43, A44–V76, A145–N178, H180–N212, C393–I426, S452–D485, and C535–A568.

The protein belongs to the TTC30/dfy-1/fleer family.

It is found in the cell projection. Its subcellular location is the cilium. In terms of biological role, required for polyglutamylation of axonemal tubulin in sensory cilia. Plays a role in anterograde intraflagellar transport (IFT), the process by which cilia precursors are transported from the base of the cilium to the site of their incorporation at the tip. The polypeptide is Tetratricopeptide repeat protein 30 homolog (Anopheles gambiae (African malaria mosquito)).